The chain runs to 421 residues: Indole-3-pyruvate monooxygenase YUCCA8 (421 aa).

Residue 30–35 participates in FAD binding; it reads GAGPSG. 201-206 contributes to the NADP(+) binding site; the sequence is GCGNSG.

The protein belongs to the FMO family. It depends on FAD as a cofactor. As to expression, expressed in organs undergoing active growth and cell division.

Its subcellular location is the endoplasmic reticulum. It catalyses the reaction indole-3-pyruvate + NADPH + O2 + H(+) = (indol-3-yl)acetate + CO2 + NADP(+) + H2O. In terms of biological role, involved in auxin biosynthesis. Converts the indole-3-pyruvic acid (IPA) produced by the TAA family to indole-3-acetic acid (IAA). Seems not able to use tryptamine (TAM) as substrate. Probably responsible for auxin biosynthesis in leaves and involved in the regulation of lateral leaf growth. Required for maintaining water homeostasis and an appropriate root to shoot ratio. Required for the inhibition of root growth by ethylene in etiolated seedlings. Functions downstream of the ethylene-response transcription factor EIL1. This chain is Indole-3-pyruvate monooxygenase YUCCA8, found in Oryza sativa subsp. indica (Rice).